The chain runs to 153 residues: Large-conductance mechanosensitive channel (153 aa).

The next 2 helical transmembrane spans lie at 16 to 36 (VIDL…VKSL) and 88 to 108 (GLFI…FMLV).

It belongs to the MscL family. In terms of assembly, homopentamer.

The protein localises to the cell inner membrane. In terms of biological role, channel that opens in response to stretch forces in the membrane lipid bilayer. May participate in the regulation of osmotic pressure changes within the cell. This Chromobacterium violaceum (strain ATCC 12472 / DSM 30191 / JCM 1249 / CCUG 213 / NBRC 12614 / NCIMB 9131 / NCTC 9757 / MK) protein is Large-conductance mechanosensitive channel.